A 127-amino-acid chain; its full sequence is Ribosome-binding factor A (127 aa).

Belongs to the RbfA family. Monomer. Binds 30S ribosomal subunits, but not 50S ribosomal subunits or 70S ribosomes.

It is found in the cytoplasm. In terms of biological role, one of several proteins that assist in the late maturation steps of the functional core of the 30S ribosomal subunit. Associates with free 30S ribosomal subunits (but not with 30S subunits that are part of 70S ribosomes or polysomes). Required for efficient processing of 16S rRNA. May interact with the 5'-terminal helix region of 16S rRNA. This chain is Ribosome-binding factor A, found in Actinobacillus pleuropneumoniae serotype 7 (strain AP76).